We begin with the raw amino-acid sequence, 462 residues long: uncharacterized protein (462 aa).

One can recognise a TRAM domain in the interval 12–70; that stretch reads MLKKNDIIQVAISDLSHEGAGVAKHDGFVFFVDNALPEEVIDMRVLKVNKNSGFGKVEA. Positions 294, 323, 344, and 392 each coordinate S-adenosyl-L-methionine. The active-site Nucleophile is the cysteine 419.

This sequence belongs to the class I-like SAM-binding methyltransferase superfamily. RNA M5U methyltransferase family.

This is an uncharacterized protein from Streptococcus pyogenes serotype M18 (strain MGAS8232).